The sequence spans 226 residues: ATP synthase F(0) complex subunit a (226 aa).

6 helical membrane passes run 12-32, 68-88, 97-117, 138-158, 164-184, and 200-222; these read PTIL…LLIP, WSLM…LGLL, QLSM…ATGF, IPML…ALAV, ITAG…LSTI, and TTLE…SLYL.

It belongs to the ATPase A chain family. As to quaternary structure, component of the ATP synthase complex composed at least of ATP5F1A/subunit alpha, ATP5F1B/subunit beta, ATP5MC1/subunit c (homooctomer), MT-ATP6/subunit a, MT-ATP8/subunit 8, ATP5ME/subunit e, ATP5MF/subunit f, ATP5MG/subunit g, ATP5MK/subunit k, ATP5MJ/subunit j, ATP5F1C/subunit gamma, ATP5F1D/subunit delta, ATP5F1E/subunit epsilon, ATP5PF/subunit F6, ATP5PB/subunit b, ATP5PD/subunit d, ATP5PO/subunit OSCP. ATP synthase complex consists of a soluble F(1) head domain (subunits alpha(3) and beta(3)) - the catalytic core - and a membrane F(0) domain - the membrane proton channel (subunits c, a, 8, e, f, g, k and j). These two domains are linked by a central stalk (subunits gamma, delta, and epsilon) rotating inside the F1 region and a stationary peripheral stalk (subunits F6, b, d, and OSCP). Interacts with DNAJC30; interaction is direct.

It is found in the mitochondrion inner membrane. It carries out the reaction H(+)(in) = H(+)(out). In terms of biological role, subunit a, of the mitochondrial membrane ATP synthase complex (F(1)F(0) ATP synthase or Complex V) that produces ATP from ADP in the presence of a proton gradient across the membrane which is generated by electron transport complexes of the respiratory chain. ATP synthase complex consist of a soluble F(1) head domain - the catalytic core - and a membrane F(1) domain - the membrane proton channel. These two domains are linked by a central stalk rotating inside the F(1) region and a stationary peripheral stalk. During catalysis, ATP synthesis in the catalytic domain of F(1) is coupled via a rotary mechanism of the central stalk subunits to proton translocation. With the subunit c (ATP5MC1), forms the proton-conducting channel in the F(0) domain, that contains two crucial half-channels (inlet and outlet) that facilitate proton movement from the mitochondrial intermembrane space (IMS) into the matrix. Protons are taken up via the inlet half-channel and released through the outlet half-channel, following a Grotthuss mechanism. The chain is ATP synthase F(0) complex subunit a from Hylobates lar (Lar gibbon).